A 967-amino-acid chain; its full sequence is Leucine--tRNA ligase (967 aa).

A 'HIGH' region motif is present at residues 43-53 (PYLSGHLHVGH). The 'KMSKS' region signature appears at 650-654 (KMSKS). Lys-653 contributes to the ATP binding site.

Belongs to the class-I aminoacyl-tRNA synthetase family.

Its subcellular location is the cytoplasm. It carries out the reaction tRNA(Leu) + L-leucine + ATP = L-leucyl-tRNA(Leu) + AMP + diphosphate. The chain is Leucine--tRNA ligase from Thermococcus onnurineus (strain NA1).